The chain runs to 1493 residues: DNA excision repair protein ERCC-6 (1493 aa).

Residues 1-39 (MPNEGIPHSSQTQEQDCLQSQPVSNNEEMAIKQESGGDG) are disordered. Positions 1–510 (MPNEGIPHSS…GFLFKKLFKY (510 aa)) are N-terminal domain; essential for its chromatin remodeling activity. The segment covering 8–27 (HSSQTQEQDCLQSQPVSNNE) has biased composition (polar residues). Serine 10 is subject to Phosphoserine; by ATM. A Phosphoserine; by CDK2 modification is found at serine 158. Residue lysine 170 is modified to N6-methylated lysine; by EHMT2. A Glycyl lysine isopeptide (Lys-Gly) (interchain with G-Cter in SUMO3) cross-link involves residue lysine 205. Residue lysine 255 forms a Glycyl lysine isopeptide (Lys-Gly) (interchain with G-Cter in SUMO2) linkage. Disordered regions lie at residues 287–323 (KQGC…VLSK) and 344–453 (GKVG…GRYR). Lysine 297 carries the N6-methylated lysine; by EHMT2 modification. Residues 353 to 363 (RPWESDMRPEA) are compositionally biased toward basic and acidic residues. Acidic residues predominate over residues 364 to 392 (EGDSEGEESEYFPTEEEEEEEDDEVEGAE). Phosphoserine is present on residues serine 429 and serine 430. An N6-methylated lysine; by EHMT2 modification is found at lysine 448. Residues serine 486 and serine 489 each carry the phosphoserine modification. The Helicase ATP-binding domain maps to 519 to 695 (WELHCQQAGG…WSLFDFIFPG (177 aa)). 532–539 (DEMGLGKT) is an ATP binding site. A DEAH box motif is present at residues 646-649 (DEGH). Residues 843-1002 (VVESLLKIWH…RRFFKSNDLY (160 aa)) form the Helicase C-terminal domain. 3 disordered regions span residues 1042-1147 (PAFG…DESI), 1181-1247 (HKSK…EQSN), and 1318-1384 (RGIS…SGPL). Lysine 1054 carries the N6-methylated lysine; by EHMT2 modification. Positions 1123–1141 (ISGNGECSNSSGTGKTSMP) are enriched in polar residues. Serine 1142 is modified (phosphoserine). Positions 1200 to 1210 (LRPKQKPKNSK) are enriched in basic residues. Basic and acidic residues-rich tracts occupy residues 1211–1221 (HCRDAKFEGTR) and 1232–1247 (QKQD…EQSN). Residues 1327–1336 (KKSRFGKKRN) are compositionally biased toward basic residues. The span at 1337–1351 (SNFSVQHPSSTSPTE) shows a compositional bias: polar residues. Serine 1348 carries the phosphoserine modification. The span at 1352-1376 (KCQDGIMKKEGKDNVPEHFSGRAED) shows a compositional bias: basic and acidic residues. A CSA-interacting motif (CIM) motif is present at residues 1386–1398 (SSSLLAKMRARNH). The segment at 1400 to 1428 (ILPERLESESGHLQEASALLPTTEHDDLL) is ubiquitin-binding domain (UBD). The segment at 1429-1493 (VEMRNFIAFQ…GIWKLKPEYC (65 aa)) is winged-helix domain (WHD). Positions 1446–1493 (STREILQEFESKLSASQSCVFRELLRNLCTFHRTSGGEGIWKLKPEYC) are essential for its interaction with RNA polymerase II, transcription-coupled nucleotide excision repair activity, association with chromatin after UV irradiation and for mediating the UV-induced translocation of ERRC8 to the nuclear matrix.

The protein belongs to the SNF2/RAD54 helicase family. As to quaternary structure, homodimer. Binds DNA. Interacts with ERCC8. Interacts with RNA polymerase II; interaction is enhanced by UV irradiation. Component of the B-WICH complex, at least composed of SMARCA5/SNF2H, BAZ1B/WSTF, SF3B1, DEK, MYO1C, ERCC6, MYBBP1A and DDX21. Interacts with KIAA1530/UVSSA. Interacts with ELOA and CUL5; the interaction is induced by DNA damaging agents or by inhibitors of RNA polymerase II elongation. Interacts (via WHD region) with RIF1. Interacts with SMARCC2/BAF170, SMARCB1/BAF47 and the neuron-specific chromatin remodeling complex (nBAF complex). Interacts with ERCC5/XPG (via C-terminus); the interaction stimulates ERCC6/CSB binding to the DNA repair bubble and ERCC6/CSB ATPase activity. May form a complex composed of RNA polymerase II, ERCC6/CSB and ERCC5/XPG which associates with the DNA repair bubble during transcription-coupled nucleotide excision repair. Interacts with CAND1, CSTF1, DDX3X, DDX5, DDX17, DDX23, DHX36, HDAC1, HNRNPU, MTA2, PRPF3, PSMD3, RBBP4, SFPQ, SMARCA1, SMARCA2, TOP1, USP7, XRCC5, COPS3, COPS4, COPS6, DDX1, DDX41, GATAD2A, GATAD2B, PRPF4, PSMC5, SF3B2, CTR9, NONO, PSMD12 and TOP2A. Phosphorylated in a cell cycle-dependent manner at Ser-158 by cyclin A-CDK2 and at Ser-10 by ATM in response to DNA damage. Phosphorylation at these two sites promotes the intramolecular interaction of the N-terminal domain with the helicase ATP-binding domain, thereby probably releasing the inhibitory effect of the N-terminal domain on its ATPase activity. Phosphorylation is essential for its chromatin remodeling activity. In terms of processing, ubiquitinated at the C-terminus. Ubiquitination by the CSA complex leads to ERCC6 proteasomal degradation in a UV-dependent manner. Stabilized following interaction with KIAA1530/UVSSA, which promotes recruitment of deubiquitinating enzyme USP7, leading to deubiquitination of ERCC6 thereby preventing UV-induced degradation of ERCC6 by the proteasome. Post-translationally, sumoylation at Lys-205 in an UV-radiation-dependent manner is essential for its transcription-coupled nucleotide excision repair activity.

It is found in the nucleus. It localises to the chromosome. The enzyme catalyses ATP + H2O = ADP + phosphate + H(+). In terms of biological role, essential factor involved in transcription-coupled nucleotide excision repair (TC-NER), a process during which RNA polymerase II-blocking lesions are rapidly removed from the transcribed strand of active genes. Plays a central role in the initiation of the TC-NER process: specifically recognizes and binds RNA polymerase II stalled at a lesion, and mediates recruitment of ERCC8/CSA, initiating DNA damage excision by TFIIH recruitment. Upon DNA-binding, it locally modifies DNA conformation by wrapping the DNA around itself, thereby modifying the interface between stalled RNA polymerase II and DNA. Acts as a chromatin remodeler at DSBs; DNA-dependent ATPase-dependent activity is essential for this function. Plays an important role in regulating the choice of the DNA double-strand breaks (DSBs) repair pathway and G2/M checkpoint activation; DNA-dependent ATPase activity is essential for this function. Regulates the DNA repair pathway choice by inhibiting non-homologous end joining (NHEJ), thereby promoting the homologous recombination (HR)-mediated repair of DSBs during the S/G2 phases of the cell cycle. Mediates the activation of the ATM- and CHEK2-dependent DNA damage responses thus preventing premature entry of cells into mitosis following the induction of DNA DSBs. Remodels chromatin by evicting histones from chromatin flanking DSBs, limiting RIF1 accumulation at DSBs thereby promoting BRCA1-mediated HR. Required for stable recruitment of ELOA and CUL5 to DNA damage sites. Also involved in UV-induced translocation of ERCC8 to the nuclear matrix. Essential for neuronal differentiation and neuritogenesis; regulates transcription and chromatin remodeling activities required during neurogenesis. The chain is DNA excision repair protein ERCC-6 from Homo sapiens (Human).